A 175-amino-acid chain; its full sequence is Large ribosomal subunit protein uL10 (175 aa).

It belongs to the universal ribosomal protein uL10 family. As to quaternary structure, part of the ribosomal stalk of the 50S ribosomal subunit. The N-terminus interacts with L11 and the large rRNA to form the base of the stalk. The C-terminus forms an elongated spine to which L12 dimers bind in a sequential fashion forming a multimeric L10(L12)X complex.

In terms of biological role, forms part of the ribosomal stalk, playing a central role in the interaction of the ribosome with GTP-bound translation factors. The protein is Large ribosomal subunit protein uL10 of Synechococcus sp. (strain CC9311).